We begin with the raw amino-acid sequence, 218 residues long: Elongation factor Ts (218 aa).

The tract at residues 82 to 85 (TDFV) is involved in Mg(2+) ion dislocation from EF-Tu.

Belongs to the EF-Ts family.

The protein localises to the cytoplasm. Associates with the EF-Tu.GDP complex and induces the exchange of GDP to GTP. It remains bound to the aminoacyl-tRNA.EF-Tu.GTP complex up to the GTP hydrolysis stage on the ribosome. The chain is Elongation factor Ts from Prochlorococcus marinus (strain MIT 9312).